Here is a 210-residue protein sequence, read N- to C-terminus: MTKGILGKKIGMTQIFDEAGRAIPVTVIEAGPCVVVQKKTVEKDGYSAIQVGFEDIKESKLNKPLRGHFAKHGVKPKRFLRELRLKDADKYEVGQEIRVDIFQPGEKVDVTGISKAKGFQGVIKRHGQQRGPMSHGSMYHRRVGSMGSNTFPARTFPGKKMPGRMGGERVTVLNLQVVKVDPDRNLLLVKGSVPGNKNSLLIIRDSVKSK.

The protein belongs to the universal ribosomal protein uL3 family. As to quaternary structure, part of the 50S ribosomal subunit. Forms a cluster with proteins L14 and L19.

Functionally, one of the primary rRNA binding proteins, it binds directly near the 3'-end of the 23S rRNA, where it nucleates assembly of the 50S subunit. This is Large ribosomal subunit protein uL3 from Caldicellulosiruptor bescii (strain ATCC BAA-1888 / DSM 6725 / KCTC 15123 / Z-1320) (Anaerocellum thermophilum).